The following is a 570-amino-acid chain: Interleukin-1 receptor accessory protein (570 aa).

Residues 1–20 form the signal peptide; it reads MGLLWYLMSLSFYGILQSHA. Ig-like C2-type domains follow at residues 21-128, 139-230, and 243-348; these read SERC…VAFP, NSAM…RTVT, and PQIY…AKVK. The Extracellular portion of the chain corresponds to 21-367; it reads SERCDDWGLD…VELACGFGAT (347 aa). 5 disulfides stabilise this stretch: Cys24/Cys122, Cys47/Cys114, Cys137/Cys181, Cys160/Cys212, and Cys266/Cys332. Asn57 is a glycosylation site (N-linked (GlcNAc...) asparagine). Positions 69–85 are essential for interaction with PTPRD; that stretch reads IWYWTRQDRDLEEPINF. 3 N-linked (GlcNAc...) asparagine glycosylation sites follow: Asn107, Asn111, and Asn118. N-linked (GlcNAc...) asparagine glycosylation is found at Asn196, Asn209, and Asn299. Residues 368 to 388 traverse the membrane as a helical segment; the sequence is VFLVVVLIVVYHVYWLEMVLF. The Cytoplasmic segment spans residues 389–570; it reads YRAHFGTDET…GLSYSSLKNV (182 aa). The TIR domain maps to 403–546; that stretch reads KEYDIYVSYA…RFWKQLQVAM (144 aa). The active site involves Glu482. The tract at residues 550–570 is disordered; that stretch reads KSPRWSSNDKQGLSYSSLKNV. A compositionally biased stretch (polar residues) spans 553–570; it reads RWSSNDKQGLSYSSLKNV.

Belongs to the interleukin-1 receptor family. In terms of assembly, the interleukin-36 receptor complex is a heterodimer of IL1RL2 and IL1RAP; the association is inhibited by IL36RN. The interleukin-1 receptor complex is a heterodimer of IL1R1 and IL1RAP. Associates with IL1R2 to form a non-signaling interleukin-1 receptor complex. Interacts with IL-33-bound IL1RL1 to form the minimal interleukin-33 signaling complex with a 1:1:1 stoichiometry. Interacts with KIT (independently of stimulation with KITLG/SCF). A mast cell-specific KITLG/SCF-induced interleukin-33 signaling complex contains IL1RL1, IL1RAP, KIT and MYD88. Interacts (via the first immunoglobilin domain) with PTPRD (via the third immunoglobilin domain); induces pre- and postsynaptic differentiation of neurons. Detected in lung, brain, spleen, thymus and liver. Expressed in brain endothelial cells, astrocytes, microglia and neurons. Isoform 3 is predominantly expressed in brain; expressed in hippocampal neurons.

The protein localises to the cell membrane. The protein resides in the secreted. It catalyses the reaction NAD(+) + H2O = ADP-D-ribose + nicotinamide + H(+). Coreceptor for IL1RL2 in the IL-36 signaling system. Coreceptor with IL1R1 in the IL-1 signaling system. Associates with IL1R1 bound to IL1B to form the high affinity interleukin-1 receptor complex which mediates interleukin-1-dependent activation of NF-kappa-B and other pathways. Signaling involves the recruitment of adapter molecules such as TOLLIP, MYD88, and IRAK1 or IRAK2 via the respective TIR domains of the receptor/coreceptor subunits. Recruits TOLLIP to the signaling complex. Does not bind to interleukin-1 alone; binding of IL1RN to IL1R1, prevents its association with IL1R1 to form a signaling complex. The cellular response is modulated through a non-signaling association with the membrane IL1R2 decoy receptor. Secreted forms (isoforms 2 and 3) associate with secreted ligand-bound IL1R2 and increase the affinity of secreted IL1R2 for IL1B; this complex formation may be the dominant mechanism for neutralization of IL1B by secreted/soluble receptors. Coreceptor for IL1RL1 in the IL-33 signaling system. Can bidirectionally induce pre- and postsynaptic differentiation of neurons by trans-synaptically binding to PTPRD. May play a role in IL1B-mediated costimulation of IFNG production from T-helper 1 (Th1) cells. Its function is as follows. Associates with secreted ligand-bound IL1R2 and increases the affinity of secreted IL1R2 for IL1B; this complex formation may be the dominant mechanism for neutralization of IL1B by secreted/soluble receptors. Enhances the ability of secreted IL1R1 to inhibit IL-33 signaling. In terms of biological role, required for Src phosphorylation by IL1B. Required for IL1B-potentiated NMDA-induced calcium influx in neurons acting in cooperation with IL1R1 isoform 2 to mediate Akt kinase activation. The polypeptide is Interleukin-1 receptor accessory protein (Il1rap) (Mus musculus (Mouse)).